Here is a 361-residue protein sequence, read N- to C-terminus: Chorismate synthase (361 aa).

Arg-48 and Arg-54 together coordinate NADP(+). Residues 131–133, 243–244, Gly-287, 302–306, and Arg-328 contribute to the FMN site; these read RSS, NA, and KPTSS.

It belongs to the chorismate synthase family. Homotetramer. FMNH2 is required as a cofactor.

The enzyme catalyses 5-O-(1-carboxyvinyl)-3-phosphoshikimate = chorismate + phosphate. Its pathway is metabolic intermediate biosynthesis; chorismate biosynthesis; chorismate from D-erythrose 4-phosphate and phosphoenolpyruvate: step 7/7. Functionally, catalyzes the anti-1,4-elimination of the C-3 phosphate and the C-6 proR hydrogen from 5-enolpyruvylshikimate-3-phosphate (EPSP) to yield chorismate, which is the branch point compound that serves as the starting substrate for the three terminal pathways of aromatic amino acid biosynthesis. This reaction introduces a second double bond into the aromatic ring system. The sequence is that of Chorismate synthase from Rhodopseudomonas palustris (strain BisA53).